The following is a 430-amino-acid chain: Adenylosuccinate synthetase (430 aa).

GTP is bound by residues 12-18 (GDEGKGK) and 40-42 (GHT). The active-site Proton acceptor is the D13. Positions 13 and 40 each coordinate Mg(2+). IMP is bound by residues 13–16 (DEGK), 38–41 (NAGH), T130, R144, Q224, T239, and R303. The active-site Proton donor is H41. A substrate-binding site is contributed by 299-305 (TNTGRPR). GTP is bound by residues R305, 331 to 333 (KLD), and 413 to 415 (STS).

It belongs to the adenylosuccinate synthetase family. In terms of assembly, homodimer. It depends on Mg(2+) as a cofactor.

It is found in the cytoplasm. The enzyme catalyses IMP + L-aspartate + GTP = N(6)-(1,2-dicarboxyethyl)-AMP + GDP + phosphate + 2 H(+). Its pathway is purine metabolism; AMP biosynthesis via de novo pathway; AMP from IMP: step 1/2. Plays an important role in the de novo pathway of purine nucleotide biosynthesis. Catalyzes the first committed step in the biosynthesis of AMP from IMP. This Rhodopseudomonas palustris (strain HaA2) protein is Adenylosuccinate synthetase.